The sequence spans 126 residues: RutC family protein y4sK (126 aa).

This sequence belongs to the RutC family.

This Sinorhizobium fredii (strain NBRC 101917 / NGR234) protein is RutC family protein y4sK.